We begin with the raw amino-acid sequence, 122 residues long: Phospholipase A2 nigroviriditoxin basic subunit B (122 aa).

Intrachain disulfides connect Cys26–Cys115, Cys28–Cys44, Cys43–Cys95, Cys49–Cys122, Cys50–Cys88, Cys57–Cys81, and Cys75–Cys86. Ca(2+) is bound by residues Tyr27, Gly29, and Gly31. Residue His47 is part of the active site. Asp48 is a binding site for Ca(2+). Residue Asp89 is part of the active site.

Belongs to the phospholipase A2 family. Group II subfamily. D49 sub-subfamily. In terms of assembly, nigroviriditoxin is a heterodimer of an acidic subunit A and a basic subunit B. The cofactor is Ca(2+). Expressed by the venom gland.

The protein localises to the secreted. The enzyme catalyses a 1,2-diacyl-sn-glycero-3-phosphocholine + H2O = a 1-acyl-sn-glycero-3-phosphocholine + a fatty acid + H(+). In terms of biological role, heterodimer A-B: Nigroviriditoxin possesses phospholipase A2 (PLA2) activity. It consists of a non-covalent association of a basic PLA2 subunit B with a non-enzymatic subunit A. Subunit B: Snake venom phospholipase A2 (PLA2) that induces myonecrosis in mice. PLA2 catalyzes the calcium-dependent hydrolysis of the 2-acyl groups in 3-sn-phosphoglycerides. This Bothriechis nigroviridis (Black-speckled palm pit viper) protein is Phospholipase A2 nigroviriditoxin basic subunit B.